Reading from the N-terminus, the 839-residue chain is Transient receptor potential cation channel subfamily V member 1 (839 aa).

Residues 1–60 (MEKWASLDSDESEPPAQENSCPDPPDRDPNSKPPPAKPHIFATRSRTRLFGKGDSEEASP) form a disordered region. The Cytoplasmic portion of the chain corresponds to 1-433 (MEKWASLDSD…QDKWDRFVKR (433 aa)). Residues 111-139 (RLYDRRSIFDAVAQSNCQELESLLSFLQK) form an ANK 1 repeat. Arg116 lines the ATP pocket. Ser117 is modified (phosphoserine; by PKA and PKD). The residue at position 145 (Thr145) is a Phosphothreonine; by PKA; in vitro. One copy of the ANK 2 repeat lies at 154–186 (TGKTCLLKAMLNLHNGQNDTIALLLDIARKTDS). ATP is bound by residues Lys156, Lys161, Asn165, 200–203 (YKGQ), and 211–212 (ER). ANK repeat units lie at residues 204–229 (TALH…ADVQ), 250–277 (ELPL…QPAD), 286–322 (NTVL…KLHP), and 336–359 (TPLA…REIH). Thr371 is subject to Phosphothreonine; by PKA; in vitro. One copy of the ANK 7 repeat lies at 394-416 (NSVLEVIAYSSSETPNRHDMLLV). The chain crosses the membrane as a helical span at residues 434-455 (IFYFNFFVYCLYMIIFTTAAYY). At 456–472 (RPVEGLPPYKLNNTVGD) the chain is on the extracellular side. The helical transmembrane segment at 473 to 497 (YFRVTGEILSVSGGVYFFFRGIQYF) threads the bilayer. Residues 498–510 (LQRRPSLKSLFVD) lie on the Cytoplasmic side of the membrane. Ser503 carries the post-translational modification Phosphoserine; by PKC/PRKCE. A helical transmembrane segment spans residues 511–532 (SYSEILFFVQSLFMLVSVVLYF). 512 to 513 (YS) provides a ligand contact to resiniferatoxin. Topologically, residues 533-535 (SHR) are extracellular. The helical transmembrane segment at 536-556 (KEYVASMVFSLAMGWTNMLYY) threads the bilayer. Residues Thr551 and Arg558 each coordinate resiniferatoxin. The Cytoplasmic segment spans residues 557–559 (TRG). Residues 560 to 598 (FQQMGIYAVMIEKMILRDLCRFMFVYLVFLFGFSTAVVT) traverse the membrane as a helical segment. Over 599–630 (LIEDGKNNSLPVESPPHKCRGSACRPGNSYNS) the chain is Extracellular. Residue Asn605 is glycosylated (N-linked (GlcNAc...) asparagine). Residues 631 to 652 (LYSTCLELFKFTIGMGDLEFTE) constitute an intramembrane region (pore-forming). Gly644 is a binding site for Na(+). The short motif at 644-647 (GMGD) is the Selectivity filter element. Asp647 is a Ca(2+) binding site. The Extracellular segment spans residues 653–656 (NYDF). Residues 657 to 683 (KAVFIILLLAYVILTYILLLNMLIALM) traverse the membrane as a helical segment. Residues 684 to 839 (GETVNKIAQE…FKDSMAPGEK (156 aa)) lie on the Cytoplasmic side of the membrane. The tract at residues 685-713 (ETVNKIAQESKNIWKLQRAITILDTEKSF) is AD. Thr705 is modified (phosphothreonine). Residues 768 to 802 (EGVKRTLSFSLRSGRVSGRNWKNFALVPLLRDAST) are interaction with calmodulin. Ser775 carries the post-translational modification Phosphoserine. A required for PIP2-mediated channel inhibition region spans residues 778 to 793 (LRSGRVSGRNWKNFAL). Ser801 bears the Phosphoserine; by PKC/PRKCE and PKC/PRKCZ mark. The segment covering 802-815 (TRDRHSTQPEEVQL) has biased composition (basic and acidic residues). Residues 802–839 (TRDRHSTQPEEVQLKHYTGSLKPEDAEVFKDSMAPGEK) form a disordered region. A Phosphoserine modification is found at Ser821. Residues 823 to 839 (KPEDAEVFKDSMAPGEK) show a composition bias toward basic and acidic residues.

The protein belongs to the transient receptor (TC 1.A.4) family. TrpV subfamily. TRPV1 sub-subfamily. In terms of assembly, homotetramer. May also form a heteromeric channel with TRPV3. Interacts with CALM, PRKCM and CSK. Interacts with PRKCG and NTRK1, probably by forming a trimeric complex. Interacts with PIRT. Interacts with the Scolopendra mutilans RhTx toxin. Interacts with TMEM100. Interacts with PACS2. Post-translationally, phosphorylation by PKA reverses capsaicin-induced dephosphorylation at multiple sites probably including Ser-117 as a major phosphorylation site. Phosphorylation by CAMKII seems to regulate binding to vanilloids. Phosphorylated and modulated by PRKCE, PRKCM and probably PRKCZ. Dephosphorylation by calcineurin seems to lead to receptor desensitization and phosphorylation by CAMKII recovers activity. In terms of tissue distribution, detected in neurons in the root ganglia (at protein level). Detected in dorsal root ganglia.

It is found in the postsynaptic cell membrane. The protein localises to the cell projection. The protein resides in the dendritic spine membrane. Its subcellular location is the cell membrane. The enzyme catalyses Ca(2+)(in) = Ca(2+)(out). It carries out the reaction Mg(2+)(in) = Mg(2+)(out). The catalysed reaction is Na(+)(in) = Na(+)(out). It catalyses the reaction K(+)(in) = K(+)(out). Its activity is regulated as follows. The channel is sensitized by ATP binding. Repeated stimulation with capsaicin gives rise to progressively smaller responses, due to desensitization. This desensitization is triggered by the influx of calcium ions and is inhibited by elevated ATP levels. Ca(2+) and CALM displace ATP from its binding site and trigger a conformation change that leads to a closed, desensitized channel. The double-knot toxin (DkTx) from the Chinese earth tiger tarantula activates the channel and traps it in an open conformation. The Scolopendra mutilans RhTx toxin potentiates the heat activation pathway mediated by this channel by binding to the charge-rich outer pore region (in an activated state). Channel activity is activated via the interaction with PIRT and phosphatidylinositol 4,5-bisphosphate (PIP2). Both PIRT and PIP2 are required to activate channel activity. Intracellular PIP2 inhibits desensitization. Non-selective calcium permeant cation channel involved in detection of noxious chemical and thermal stimuli. Seems to mediate proton influx and may be involved in intracellular acidosis in nociceptive neurons. Involved in mediation of inflammatory pain and hyperalgesia. Sensitized by a phosphatidylinositol second messenger system activated by receptor tyrosine kinases, which involves PKC isozymes and PCL. Activation by vanilloids, like capsaicin, and temperatures higher than 42 degrees Celsius. Upon activation, exhibits a time- and Ca(2+)-dependent outward rectification, followed by a long-lasting refractory state. Mild extracellular acidic pH (6.5) potentiates channel activation by noxious heat and vanilloids, whereas acidic conditions (pH &lt;6) directly activate the channel. Can be activated by endogenous compounds, including 12-hydroperoxytetraenoic acid and bradykinin. Acts as ionotropic endocannabinoid receptor with central neuromodulatory effects. Triggers a form of long-term depression (TRPV1-LTD) mediated by the endocannabinoid anandamine in the hippocampus and nucleus accumbens by affecting AMPA receptors endocytosis. In Mus musculus (Mouse), this protein is Transient receptor potential cation channel subfamily V member 1 (Trpv1).